Reading from the N-terminus, the 949-residue chain is Insulin receptor substrate 1 (949 aa).

Residues 8 to 109 (GMALSGYLKK…WLDKLLVLQR (102 aa)) enclose the PH domain. The 115-residue stretch at 122–236 (YDQVWQVVIQ…SAMSAKTESN (115 aa)) folds into the IRS-type PTB domain. Residues 247–270 (PDLSHEPMRKRSSSANEASKPINV) form a disordered region. Residues serine 286, serine 287, and serine 342 each carry the phosphoserine modification. Residues 304–345 (RNGTLSESSNQTYFGSNHGLRSNTISGNRPHSTNKHSNSPTF) are compositionally biased toward polar residues. A disordered region spans residues 304–373 (RNGTLSESSN…SDDNGSYSHY (70 aa)). Position 410 is a phosphotyrosine; by INSR (tyrosine 410). Residues 410-413 (YIPM) carry the YXXM motif 1 motif. The interval 530–556 (RSQSSITKEGSGYGTSGNRQKKSTSAP) is disordered. Serine 554 carries the phosphoserine modification. The short motif at 640–643 (YLEM) is the YXXM motif 2 element. Over residues 696 to 706 (REQTTSEEKKS) the composition is skewed to basic and acidic residues. The segment at 696 to 718 (REQTTSEEKKSNSPLNEKPFSLK) is disordered. Tyrosine 892 bears the Phosphotyrosine; by INSR mark. Positions 906–949 (AKYLKRGSRESPPVSACPEDGNTYAKIDFDQSDSSSSSSNIFNT) are disordered. 2 positions are modified to phosphoserine: serine 913 and serine 916. At tyrosine 929 the chain carries Phosphotyrosine; by INSR. Positions 937 to 949 (SDSSSSSSNIFNT) are enriched in low complexity.

In terms of assembly, bindings to phosphatidylinositol 3-kinase and SHP2.

Functionally, activates phosphatidylinositol 3-kinase when bound to the regulatory p85 subunit. May mediate the control of various cellular processes by insulin-like peptides. When phosphorylated by the insulin receptor binds specifically to various cellular proteins containing SH2 domains. Involved in control of cell proliferation, cell size, and body and organ growth throughout development. Also has a role in a signaling pathway controlling the physiological response required to endure periods of low nutrient conditions. Insulin/insulin-like growth factor (IGF) signaling pathway has a role in regulating aging and is necessary in the ovary for vitellogenic maturation. The polypeptide is Insulin receptor substrate 1 (Drosophila yakuba (Fruit fly)).